Reading from the N-terminus, the 101-residue chain is MAKKSSIEKNNRRKRMVKNAAPKRERLKAIIADKTLPMEERFAATLKLAEMPRNSSATRVRLRCELSGRPRSNYRKNKLSRIALRELGSKGMVPGLVKSSW.

Basic and acidic residues predominate over residues M1–N10. Residues M1 to K23 form a disordered region.

It belongs to the universal ribosomal protein uS14 family. As to quaternary structure, part of the 30S ribosomal subunit. Contacts proteins S3 and S10.

In terms of biological role, binds 16S rRNA, required for the assembly of 30S particles and may also be responsible for determining the conformation of the 16S rRNA at the A site. This chain is Small ribosomal subunit protein uS14, found in Bradyrhizobium diazoefficiens (strain JCM 10833 / BCRC 13528 / IAM 13628 / NBRC 14792 / USDA 110).